Consider the following 75-residue polypeptide: Translation initiation factor IF-1, chloroplastic (75 aa).

The S1-like domain occupies Met-1–Ser-72.

This sequence belongs to the IF-1 family. Component of the 30S ribosomal translation pre-initiation complex which assembles on the 30S ribosome in the order IF-2 and IF-3, IF-1 and N-formylmethionyl-tRNA(fMet); mRNA recruitment can occur at any time during PIC assembly.

It is found in the plastid. Its subcellular location is the chloroplast. One of the essential components for the initiation of protein synthesis. Stabilizes the binding of IF-2 and IF-3 on the 30S subunit to which N-formylmethionyl-tRNA(fMet) subsequently binds. Helps modulate mRNA selection, yielding the 30S pre-initiation complex (PIC). Upon addition of the 50S ribosomal subunit IF-1, IF-2 and IF-3 are released leaving the mature 70S translation initiation complex. The sequence is that of Translation initiation factor IF-1, chloroplastic from Pinus koraiensis (Korean pine).